Reading from the N-terminus, the 91-residue chain is UPF0250 protein Psyr_4360 (91 aa).

This sequence belongs to the UPF0250 family.

This chain is UPF0250 protein Psyr_4360, found in Pseudomonas syringae pv. syringae (strain B728a).